The chain runs to 212 residues: Pyridoxine/pyridoxamine 5'-phosphate oxidase (212 aa).

Substrate is bound by residues 7–10 and lysine 66; that span reads RREY. Residues 61–66, 76–77, arginine 82, lysine 83, and glutamine 105 each bind FMN; these read RIVLLK and YT. Substrate is bound by residues tyrosine 123, arginine 127, and serine 131. Residues 140-141 and tryptophan 185 each bind FMN; that span reads QS. 191–193 provides a ligand contact to substrate; that stretch reads RLH. Arginine 195 serves as a coordination point for FMN.

This sequence belongs to the pyridoxamine 5'-phosphate oxidase family. Homodimer. It depends on FMN as a cofactor.

The enzyme catalyses pyridoxamine 5'-phosphate + O2 + H2O = pyridoxal 5'-phosphate + H2O2 + NH4(+). It carries out the reaction pyridoxine 5'-phosphate + O2 = pyridoxal 5'-phosphate + H2O2. It participates in cofactor metabolism; pyridoxal 5'-phosphate salvage; pyridoxal 5'-phosphate from pyridoxamine 5'-phosphate: step 1/1. The protein operates within cofactor metabolism; pyridoxal 5'-phosphate salvage; pyridoxal 5'-phosphate from pyridoxine 5'-phosphate: step 1/1. Functionally, catalyzes the oxidation of either pyridoxine 5'-phosphate (PNP) or pyridoxamine 5'-phosphate (PMP) into pyridoxal 5'-phosphate (PLP). This chain is Pyridoxine/pyridoxamine 5'-phosphate oxidase, found in Hahella chejuensis (strain KCTC 2396).